The following is a 444-amino-acid chain: Endothelin-3 receptor (444 aa).

The first 18 residues, 1 to 18 (MATVILFVAWMACLMVGV), serve as a signal peptide directing secretion. The Extracellular portion of the chain corresponds to 19-88 (CYQEFQTQQN…SRAKIRHAFK (70 aa)). N-linked (GlcNAc...) asparagine glycosylation is present at Asn60. Residues 89 to 113 (YVTTILSCVIFLVGIVGNSTLLRII) form a helical membrane-spanning segment. The Cytoplasmic segment spans residues 114 to 124 (YKNKCMRNGPN). Residues 125–145 (VLIASLALGDLFYILIAIPII) traverse the membrane as a helical segment. The Extracellular segment spans residues 146 to 161 (SISFWLSTGHSEYIYQ). A helical transmembrane segment spans residues 162–180 (LVHLYRARVYSLSLCALSI). At 181–201 (DRYRAVASWNRIRSIGIPVRK) the chain is on the cytoplasmic side. A helical membrane pass occupies residues 202 to 226 (AIELTLIWAVAIIVAVPEAIAFNLV). Topologically, residues 227 to 254 (ELDFRGQTILVCMLPMEQTSDFMRFYQE) are extracellular. A helical transmembrane segment spans residues 255–279 (VKVWWLFGFYFCLPLACTGVFYTLM). The Cytoplasmic segment spans residues 280-307 (SCEMLSIKNGMRIALNDHMKQRREVAKT). Residues 308–328 (VFCLVVIFALCWLPLHVSSIF) traverse the membrane as a helical segment. The Extracellular portion of the chain corresponds to 329–365 (VRLSATVKRACILKNKRSCIMAEIQTGVNYQLLMVMN). The helical transmembrane segment at 366–386 (YTGINMASLNSCIGPVALYFV) threads the bilayer. The Cytoplasmic portion of the chain corresponds to 387–444 (SRKFKNCFQSCLCCWCHRPTLTITPMDEKGSGGKWKANGHDLDLDRSSSRLSNKYSSS). Residues 416-444 (GSGGKWKANGHDLDLDRSSSRLSNKYSSS) form a disordered region. The span at 424–434 (NGHDLDLDRSS) shows a compositional bias: basic and acidic residues. Over residues 435–444 (SRLSNKYSSS) the composition is skewed to low complexity.

The protein belongs to the G-protein coupled receptor 1 family. Endothelin receptor subfamily.

It is found in the cell membrane. Receptor for endothelin-3. Mediates its action by association with G proteins that activate a phosphatidylinositol-calcium second messenger system. The protein is Endothelin-3 receptor of Xenopus laevis (African clawed frog).